The sequence spans 489 residues: Cytochrome P450 monooxygenase trt6 (489 aa).

A helical membrane pass occupies residues 10-30 (SLWSFGLWILVILSPVLFFAS). 2 N-linked (GlcNAc...) asparagine glycosylation sites follow: N364 and N407. Heme is bound at residue C430.

It belongs to the cytochrome P450 family. Heme serves as cofactor.

The protein resides in the membrane. The protein operates within secondary metabolite biosynthesis; terpenoid biosynthesis. Its function is as follows. Cytochrome P450 monooxygenase; part of the gene cluster that mediates the biosynthesis of terretonin, a fungal meroterpenoid that acts as a mycotoxin. The first step of the pathway is the synthesis of 3,5-dimethylorsellinic acid (DMOA) by the polyketide synthase trt4. DMOA is then prenylated into farnesyl-DMOA by the polyprenyl transferase trt2. Methylation by the methyltransferase trt5 then leads to farnesyl-DMOA methyl ester which is further subject to epoxidation by the FAD-dependent monooxygenase trt8 to yield epoxyfarnesyl-DMOA methyl ester. Cyclization of epoxyfarnesyl-DMOA methyl ester by the terpene cyclase trt1 leads to a tetracycle intermediate which is in turn converted to preterretonin. Dehydrogenase trt9 comes next to transform preterretonin to preterrenoid. The FAD-dependent monooxygenase trt3 is then required for the C-hydroxylation at C16 of preterrenoid to yield terrenoid. The cytochrome P450 trt6 catalyzes three successive oxidations to transform terrenoid into an unstable intermediate, which then undergoes the D-ring expansion and unusual rearrangement of the methoxy group to afford the core skeleton of terretonin. Trt14 catalyzes the D-ring expansion of terretonin involving intramolecular methoxy rearrangement as well as the hydrolysis of the expanded D-ring and the methyl ester moiety. Finally, the nonheme iron-dependent dioxygenase trt7 accomplishes the last two oxidation reactions steps to complete the biosynthesis of terretonin. Terretonin C is produced via spontaneous decarboxylation of the terretonin precursor. Another shunt product of the terretonin biosynthesis is dihydrofarnesyl-DMOA, derived from epoxyfarnesyl-DMOA through hydrolysis of the epoxide. This is Cytochrome P450 monooxygenase trt6 from Aspergillus terreus (strain NIH 2624 / FGSC A1156).